Consider the following 296-residue polypeptide: Glycine N-acyltransferase (296 aa).

3 positions are modified to N6-acetyllysine; alternate: K16, K127, and K141. An N6-succinyllysine; alternate mark is found at K16, K127, and K141. K159 carries the N6-acetyllysine modification. The residue at position 169 (K169) is an N6-succinyllysine. N6-acetyllysine; alternate is present on residues K183 and K256. N6-succinyllysine; alternate is present on residues K183 and K256.

It belongs to the glycine N-acyltransferase family.

The protein localises to the mitochondrion. It carries out the reaction an acyl-CoA + glycine = an N-acylglycine + CoA + H(+). The enzyme catalyses benzoyl-CoA + glycine = N-benzoylglycine + CoA + H(+). Its function is as follows. Mitochondrial acyltransferase which transfers an acyl group to the N-terminus of glycine and glutamine, although much less efficiently. Can conjugate a multitude of substrates to form a variety of N-acylglycines, thereby detoxify xenobiotics, such as benzoic acid or salicylic acid, and endogenous organic acids, such as isovaleric acid. This is Glycine N-acyltransferase (GLYAT) from Pongo abelii (Sumatran orangutan).